A 1079-amino-acid chain; its full sequence is Adhesion G-protein coupled receptor F3 (1079 aa).

The N-terminal stretch at 1 to 25 (MVCSAAPLLLLATTLPLLGSPVAQA) is a signal peptide. At 26–775 (SQPVSETGVR…EEPALALLTQ (750 aa)) the chain is on the extracellular side. N-linked (GlcNAc...) asparagine glycans are attached at residues asparagine 188, asparagine 264, asparagine 301, asparagine 382, asparagine 441, and asparagine 648. A GAIN-B domain is found at 599 to 765 (HPFAFSLPNV…SVLMSPHTVP (167 aa)). 2 disulfides stabilise this stretch: cysteine 715–cysteine 747 and cysteine 734–cysteine 749. Positions 715-765 (CVFWDHSLFQGRGGWSKEGCQAQVASASPTAQCLCQHLTAFSVLMSPHTVP) are GPS. The helical transmembrane segment at 776–796 (VGLGASILALLVCLGVYWLVW) threads the bilayer. Topologically, residues 797–811 (RVVVRNKISYFRHAA) are cytoplasmic. The chain crosses the membrane as a helical span at residues 812–832 (LLNMVFCLLAADTCFLGAPFL). Residues 833 to 851 (SPGPRSPLCLAAAFLCHFL) lie on the Extracellular side of the membrane. A helical transmembrane segment spans residues 852–874 (YLATFFWMLAQALVLAHQLLFVF). Topologically, residues 875 to 881 (HQLAKHR) are cytoplasmic. A helical transmembrane segment spans residues 882 to 902 (VLPLMVLLGYLCPLGLAGVTL). The Extracellular portion of the chain corresponds to 903-928 (GLYLPQGQYLREGECWLDGKGGALYT). A helical transmembrane segment spans residues 929–949 (FVGPVLAIIGVNGLVLAMAML). Residues 950–973 (KLLRPSLSEGPPAEKRQALLGVIK) are Cytoplasmic-facing. Residues 974–994 (ALLILTPIFGLTWGLGLATLL) form a helical membrane-spanning segment. The Extracellular portion of the chain corresponds to 995–1002 (EEVSTVPH). The helical transmembrane segment at 1003–1023 (YIFTILNTLQGVFILLFGCLM) threads the bilayer. Residues 1024–1079 (DRKIQEALRKRFCRAQAPSSTISLVSCCLQILSCASKSMSEGIPWPSSEDMGTARS) lie on the Cytoplasmic side of the membrane.

It belongs to the G-protein coupled receptor 2 family. Adhesion G-protein coupled receptor (ADGR) subfamily. In terms of assembly, heterodimer of 2 chains generated by proteolytic processing; the large extracellular N-terminal fragment and the membrane-bound C-terminal fragment predominantly remain associated and non-covalently linked. In terms of processing, autoproteolytically processed at the GPS region of the GAIN-B domain; this cleavage modulates receptor activity.

The protein localises to the membrane. Its function is as follows. Orphan receptor. This Homo sapiens (Human) protein is Adhesion G-protein coupled receptor F3 (ADGRF3).